We begin with the raw amino-acid sequence, 257 residues long: Acyl-[acyl-carrier-protein]--UDP-N-acetylglucosamine O-acyltransferase (257 aa).

The protein belongs to the transferase hexapeptide repeat family. LpxA subfamily. Homotrimer.

Its subcellular location is the cytoplasm. It carries out the reaction a (3R)-hydroxyacyl-[ACP] + UDP-N-acetyl-alpha-D-glucosamine = a UDP-3-O-[(3R)-3-hydroxyacyl]-N-acetyl-alpha-D-glucosamine + holo-[ACP]. Its pathway is glycolipid biosynthesis; lipid IV(A) biosynthesis; lipid IV(A) from (3R)-3-hydroxytetradecanoyl-[acyl-carrier-protein] and UDP-N-acetyl-alpha-D-glucosamine: step 1/6. Involved in the biosynthesis of lipid A, a phosphorylated glycolipid that anchors the lipopolysaccharide to the outer membrane of the cell. This chain is Acyl-[acyl-carrier-protein]--UDP-N-acetylglucosamine O-acyltransferase, found in Anaeromyxobacter sp. (strain Fw109-5).